The sequence spans 191 residues: Dephospho-CoA kinase (191 aa).

Residues 3–191 form the DPCK domain; sequence AIGITGSYAS…NLIANLECRV (189 aa). Position 11 to 16 (11 to 16) interacts with ATP; it reads ASGKTF.

Belongs to the CoaE family.

It localises to the cytoplasm. It carries out the reaction 3'-dephospho-CoA + ATP = ADP + CoA + H(+). It functions in the pathway cofactor biosynthesis; coenzyme A biosynthesis; CoA from (R)-pantothenate: step 5/5. Catalyzes the phosphorylation of the 3'-hydroxyl group of dephosphocoenzyme A to form coenzyme A. The chain is Dephospho-CoA kinase from Rickettsia bellii (strain RML369-C).